Here is a 193-residue protein sequence, read N- to C-terminus: uncharacterized protein (193 aa).

3 helical membrane-spanning segments follow: residues 5 to 25, 63 to 83, and 90 to 110; these read LILL…FIIF, IFIL…LINI, and ILTF…LTPA.

The protein resides in the cell membrane. This is an uncharacterized protein from Methanocaldococcus jannaschii (strain ATCC 43067 / DSM 2661 / JAL-1 / JCM 10045 / NBRC 100440) (Methanococcus jannaschii).